Reading from the N-terminus, the 25-residue chain is Mu-conotoxin CnIIIB (25 aa).

Position 1 is a pyrrolidone carboxylic acid; partial (Q1). Intrachain disulfides connect C3–C15, C4–C21, and C10–C22.

The protein belongs to the conotoxin M superfamily. In terms of tissue distribution, expressed by the venom duct.

The protein resides in the secreted. Its function is as follows. Mu-conotoxins block voltage-gated sodium channels (Nav). This synthetic toxin blocks slightly but irreversibly tetrodotoxin-resistant VGSCs. This Conus consors (Singed cone) protein is Mu-conotoxin CnIIIB.